The sequence spans 952 residues: Protein translocase subunit SecA (952 aa).

ATP-binding positions include Gln135, 153 to 157, and Asp575; that span reads GEGKT. The segment covering 916-930 has biased composition (low complexity); the sequence is VSAKAATQPAAPAAK. Residues 916 to 952 form a disordered region; the sequence is VSAKAATQPAAPAAKEVGRNDPCPCGSGKKYKKCCGK. Zn(2+)-binding residues include Cys938, Cys940, Cys949, and Cys950.

Belongs to the SecA family. In terms of assembly, monomer and homodimer. Part of the essential Sec protein translocation apparatus which comprises SecA, SecYEG and auxiliary proteins SecDF. Other proteins may also be involved. Zn(2+) is required as a cofactor.

The protein resides in the cell membrane. The protein localises to the cytoplasm. It catalyses the reaction ATP + H2O + cellular proteinSide 1 = ADP + phosphate + cellular proteinSide 2.. Functionally, part of the Sec protein translocase complex. Interacts with the SecYEG preprotein conducting channel. Has a central role in coupling the hydrolysis of ATP to the transfer of proteins into and across the cell membrane, serving as an ATP-driven molecular motor driving the stepwise translocation of polypeptide chains across the membrane. This Dehalococcoides mccartyi (strain ATCC BAA-2266 / KCTC 15142 / 195) (Dehalococcoides ethenogenes (strain 195)) protein is Protein translocase subunit SecA.